The chain runs to 828 residues: Periplasmic nitrate reductase 1 (828 aa).

The segment at residues 1 to 30 is a signal peptide (tat-type signal); that stretch reads MKMTRRAFVKANAAASAAAVAGITLPASAA. Positions 41-97 constitute a 4Fe-4S Mo/W bis-MGD-type domain; that stretch reads IKWDKAPCRFCGTGCSVLVGTQNGRVVATQGDPEAPVNKGLNCIKGYFLSKIMYGKD. 4 residues coordinate [4Fe-4S] cluster: C48, C51, C55, and C83. Residues K85, Q152, N177, C181, 214–221, 245–249, 264–266, M374, Q378, N484, 510–511, K533, D560, and 718–727 contribute to the Mo-bis(molybdopterin guanine dinucleotide) site; these read WGSNMAEM, STYYH, QTD, SD, and TGRVLEHWHT. F794 contributes to the substrate binding site. Mo-bis(molybdopterin guanine dinucleotide) contacts are provided by N802 and K819.

It belongs to the prokaryotic molybdopterin-containing oxidoreductase family. NasA/NapA/NarB subfamily. In terms of assembly, component of the periplasmic nitrate reductase NapAB complex composed of NapA and NapB. [4Fe-4S] cluster is required as a cofactor. Mo-bis(molybdopterin guanine dinucleotide) serves as cofactor. Post-translationally, predicted to be exported by the Tat system. The position of the signal peptide cleavage has not been experimentally proven.

The protein resides in the periplasm. It carries out the reaction 2 Fe(II)-[cytochrome] + nitrate + 2 H(+) = 2 Fe(III)-[cytochrome] + nitrite + H2O. In terms of biological role, catalytic subunit of the periplasmic nitrate reductase complex NapAB. Receives electrons from NapB and catalyzes the reduction of nitrate to nitrite. This chain is Periplasmic nitrate reductase 1, found in Photobacterium profundum (strain SS9).